The chain runs to 906 residues: Catenin alpha-1 (906 aa).

Thr2 carries the post-translational modification N-acetylthreonine. The tract at residues 2-228 (TAVHAGNINF…PILYTASQAC (227 aa)) is involved in homodimerization. Lys57 is covalently cross-linked (Glycyl lysine isopeptide (Lys-Gly) (interchain with G-Cter in SUMO2)). Residues 97–148 (VRKQGDLMKSAAGEFADDPCSSVKRGNMVRAARALLSAVTRLLILADMADVY) are interaction with JUP and CTNNB1. Phosphoserine is present on residues Ser264, Ser295, and Ser297. An interaction with alpha-actinin region spans residues 325–394 (TRDDRRERIV…AVMDHVSDSF (70 aa)). Thr634 is subject to Phosphothreonine. Phosphoserine is present on Ser641. Phosphothreonine is present on Thr645. Ser652 and Ser655 each carry phosphoserine. Thr658 is modified (phosphothreonine). Lys797 participates in a covalent cross-link: Glycyl lysine isopeptide (Lys-Gly) (interchain with G-Cter in SUMO2). The residue at position 851 (Ser851) is a Phosphoserine. The span at 864 to 880 (PEKKPLVKREKQDETQT) shows a compositional bias: basic and acidic residues. The tract at residues 864–894 (PEKKPLVKREKQDETQTKIKRASQKKHVNPV) is disordered. Residues 881 to 891 (KIKRASQKKHV) show a composition bias toward basic residues.

This sequence belongs to the vinculin/alpha-catenin family. Monomer and homodimer; the monomer preferentially binds to CTNNB1 and the homodimer to actin. Component of an cadherin:catenin adhesion complex composed of at least of CDH26, beta-catenin/CTNNB1, alpha-catenin/CTNNA1 and p120 catenin/CTNND1. Possible component of an E-cadherin/ catenin adhesion complex together with E-cadherin/CDH1 and beta-catenin/CTNNB1 or gamma-catenin/JUP; the complex is located to adherens junctions. The stable association of CTNNA1 is controversial as CTNNA1 was shown not to bind to F-actin when assembled in the complex. Alternatively, the CTNNA1-containing complex may be linked to F-actin by other proteins such as LIMA1. Binds AFDN and F-actin. Interacts with LIMA1. Interacts with ARHGAP21. Interacts with AJUBA. Interacts with vinculin/VCL. Interacts with TJP2/ZO2 (via N-terminus). Interacts with TJP1/ZO1 (via N-terminus). Sumoylated. In terms of processing, phosphorylation seems to contribute to the strength of cell-cell adhesion rather than to the basic capacity for cell-cell adhesion. In terms of tissue distribution, expressed in cerebellum, heart, liver, small intestine, kidney and placenta (at protein level).

The protein localises to the cytoplasm. It is found in the cytoskeleton. The protein resides in the cell junction. Its subcellular location is the adherens junction. It localises to the cell membrane. The protein localises to the nucleus. In terms of biological role, associates with the cytoplasmic domain of a variety of cadherins. The association of catenins to cadherins produces a complex which is linked to the actin filament network, and which seems to be of primary importance for cadherins cell-adhesion properties. Can associate with both E- and N-cadherins. Originally believed to be a stable component of E-cadherin/catenin adhesion complexes and to mediate the linkage of cadherins to the actin cytoskeleton at adherens junctions. In contrast, cortical actin was found to be much more dynamic than E-cadherin/catenin complexes and CTNNA1 was shown not to bind to F-actin when assembled in the complex suggesting a different linkage between actin and adherens junctions components. The homodimeric form may regulate actin filament assembly and inhibit actin branching by competing with the Arp2/3 complex for binding to actin filaments. Involved in the regulation of WWTR1/TAZ, YAP1 and TGFB1-dependent SMAD2 and SMAD3 nuclear accumulation. May play a crucial role in cell differentiation. In Mus musculus (Mouse), this protein is Catenin alpha-1.